Here is a 279-residue protein sequence, read N- to C-terminus: DNA repair protein RecO (279 aa).

Belongs to the RecO family.

In terms of biological role, involved in DNA repair and RecF pathway recombination. In Thermosynechococcus vestitus (strain NIES-2133 / IAM M-273 / BP-1), this protein is DNA repair protein RecO.